The sequence spans 158 residues: Succinate dehydrogenase assembly factor 2, mitochondrial (158 aa).

Residues 1 to 23 (MLRQLLATARRLLLPLATPKRCL) constitute a mitochondrion transit peptide.

This sequence belongs to the SDHAF2 family. Interacts with the flavoprotein subunit within the SDH catalytic dimer.

The protein localises to the mitochondrion matrix. Its function is as follows. Plays an essential role in the assembly of succinate dehydrogenase (SDH), an enzyme complex (also referred to as respiratory complex II) that is a component of both the tricarboxylic acid (TCA) cycle and the mitochondrial electron transport chain, and which couples the oxidation of succinate to fumarate with the reduction of ubiquinone (coenzyme Q) to ubiquinol. Required for flavinylation (covalent attachment of FAD) of the flavoprotein subunit of the SDH catalytic dimer. The protein is Succinate dehydrogenase assembly factor 2, mitochondrial of Drosophila virilis (Fruit fly).